A 485-amino-acid polypeptide reads, in one-letter code: MNSVSPSAVQYIVGGGAHEDKASASSKRHLGHGAVPDGIREGSGEPDEVDRLKAKFMSAWNNVKYGWTVKSKTSFNKSSPLILLGQSFLFNNEDEVERFRQTFVSCVWLTYRREFPQLDGSSLTTDCGWGCMLRSGQMMLAQGLLLHLMPTDWRWSDCHALTDVDFEVLKPRSPSRPAGMSMPSFSSSWSSSIPQINPSPGITEAHRRAPARCPSASPDPQVDALHRKVVSCFGDHPSAPFGVHQLVELGKESGKRAGDWYGPSVVAHMLRKAVARAAEFEDLAVYVAQDCTVYKEDVMSLCESSGVGWKSVVILVPVRLGGESLNPSYIECVKNILKLKCCIGIIGGKPKHSLFFVGFQDEQLLYLDPHYCQPVVDVTQANFSLESFHCNSPRKMNFSRMDPSCTIGLYARSKTDFESLCTAVSEALSSSKEKYPIFTFVEGRGQIYGMEGPSGGSVDAPAHIFTCSRLSRNNKRGSTDEFVLL.

A disordered region spans residues 22-46 (ASASSKRHLGHGAVPDGIREGSGEP). C131 functions as the Nucleophile in the catalytic mechanism. Residues D368 and H370 contribute to the active site.

This sequence belongs to the peptidase C54 family.

It is found in the cytoplasm. The enzyme catalyses [protein]-C-terminal L-amino acid-glycyl-phosphatidylethanolamide + H2O = [protein]-C-terminal L-amino acid-glycine + a 1,2-diacyl-sn-glycero-3-phosphoethanolamine. The catalysed reaction is [protein]-C-terminal L-amino acid-glycyl-phosphatidylserine + H2O = [protein]-C-terminal L-amino acid-glycine + a 1,2-diacyl-sn-glycero-3-phospho-L-serine. In terms of biological role, cysteine protease that plays a key role in autophagy by mediating both proteolytic activation and delipidation of ATG8 family proteins. The protease activity is required for proteolytic activation of ATG8 family proteins to reveal a C-terminal glycine. Exposure of the glycine at the C-terminus is essential for ATG8 proteins conjugation to phosphatidylethanolamine (PE) and insertion to membranes, which is necessary for autophagy. In addition to the protease activity, also mediates delipidation of ATG8 family proteins. Catalyzes delipidation of PE-conjugated forms of ATG8 proteins during macroautophagy. Also involved in non-canonical autophagy, a parallel pathway involving conjugation of ATG8 proteins to single membranes at endolysosomal compartments, by catalyzing delipidation of ATG8 proteins conjugated to phosphatidylserine (PS). ATG4D plays a role in the autophagy-mediated neuronal homeostasis in the central nervous system. This chain is Cysteine protease atg4da, found in Danio rerio (Zebrafish).